The chain runs to 342 residues: N-acetyl-gamma-glutamyl-phosphate reductase (342 aa).

Cys147 is an active-site residue.

This sequence belongs to the NAGSA dehydrogenase family. Type 1 subfamily.

The protein localises to the cytoplasm. The catalysed reaction is N-acetyl-L-glutamate 5-semialdehyde + phosphate + NADP(+) = N-acetyl-L-glutamyl 5-phosphate + NADPH + H(+). It participates in amino-acid biosynthesis; L-arginine biosynthesis; N(2)-acetyl-L-ornithine from L-glutamate: step 3/4. Its function is as follows. Catalyzes the NADPH-dependent reduction of N-acetyl-5-glutamyl phosphate to yield N-acetyl-L-glutamate 5-semialdehyde. The polypeptide is N-acetyl-gamma-glutamyl-phosphate reductase (Methanosphaera stadtmanae (strain ATCC 43021 / DSM 3091 / JCM 11832 / MCB-3)).